The sequence spans 228 residues: Urease accessory protein UreF 1 (228 aa).

It belongs to the UreF family. In terms of assembly, ureD, UreF and UreG form a complex that acts as a GTP-hydrolysis-dependent molecular chaperone, activating the urease apoprotein by helping to assemble the nickel containing metallocenter of UreC. The UreE protein probably delivers the nickel.

It is found in the cytoplasm. Its function is as follows. Required for maturation of urease via the functional incorporation of the urease nickel metallocenter. In terms of biological role, disruption of the ure1 gene cluster suggests that it protects brucellae during their passage through the stomach. The major route of infection in human brucellosis is oral. This chain is Urease accessory protein UreF 1, found in Brucella abortus (strain 2308).